The sequence spans 160 residues: 2-C-methyl-D-erythritol 2,4-cyclodiphosphate synthase (160 aa).

A divalent metal cation is bound by residues Asp12 and His14. 4-CDP-2-C-methyl-D-erythritol 2-phosphate is bound by residues 12-14 (DVH) and 38-39 (HS). Residue His46 coordinates a divalent metal cation. 4-CDP-2-C-methyl-D-erythritol 2-phosphate-binding positions include 60-62 (DIG), 65-69 (FPDTD), 136-139 (TTTE), Phe143, and Arg146.

This sequence belongs to the IspF family. In terms of assembly, homotrimer. A divalent metal cation is required as a cofactor.

It catalyses the reaction 4-CDP-2-C-methyl-D-erythritol 2-phosphate = 2-C-methyl-D-erythritol 2,4-cyclic diphosphate + CMP. Its pathway is isoprenoid biosynthesis; isopentenyl diphosphate biosynthesis via DXP pathway; isopentenyl diphosphate from 1-deoxy-D-xylulose 5-phosphate: step 4/6. Functionally, involved in the biosynthesis of isopentenyl diphosphate (IPP) and dimethylallyl diphosphate (DMAPP), two major building blocks of isoprenoid compounds. Catalyzes the conversion of 4-diphosphocytidyl-2-C-methyl-D-erythritol 2-phosphate (CDP-ME2P) to 2-C-methyl-D-erythritol 2,4-cyclodiphosphate (ME-CPP) with a corresponding release of cytidine 5-monophosphate (CMP). This is 2-C-methyl-D-erythritol 2,4-cyclodiphosphate synthase from Acinetobacter baumannii (strain AB307-0294).